The primary structure comprises 619 residues: Grainyhead-like protein 2 homolog (619 aa).

The segment at 1–90 is transcription activation; the sequence is MSQETDNKRL…KINEGHEDQD (90 aa). Disordered stretches follow at residues 86 to 108, 125 to 147, and 423 to 444; these read HEDQ…STGE, NDTV…PQPA, and EERK…CNNS. Residues 99-108 show a composition bias toward polar residues; sequence ETPSNLSTGE. Residues 239-477 enclose the Grh/CP2 DB domain; sequence ASSTFQYTLE…DLDVQPVLFI (239 aa).

It belongs to the grh/CP2 family. Grainyhead subfamily.

It is found in the nucleus. It localises to the membrane. Transcription factor playing an important role in primary neurulation and in epithelial development. Binds directly to the consensus DNA sequence 5'-AACCGGTT-3' acting as an activator and repressor on distinct target genes. The protein is Grainyhead-like protein 2 homolog (grhl2) of Xenopus tropicalis (Western clawed frog).